The chain runs to 235 residues: 6-carboxyhexanoate--CoA ligase (235 aa).

Belongs to the BioW family. Homodimer. It depends on Mg(2+) as a cofactor.

The catalysed reaction is heptanedioate + ATP + CoA = 6-carboxyhexanoyl-CoA + AMP + diphosphate. It participates in metabolic intermediate metabolism; pimeloyl-CoA biosynthesis; pimeloyl-CoA from pimelate: step 1/1. In terms of biological role, catalyzes the transformation of pimelate into pimeloyl-CoA with concomitant hydrolysis of ATP to AMP. The chain is 6-carboxyhexanoate--CoA ligase from Desulfovibrio desulfuricans (strain ATCC 27774 / DSM 6949 / MB).